The chain runs to 104 residues: Large ribosomal subunit protein bL21c (104 aa).

It belongs to the bacterial ribosomal protein bL21 family. Part of the 50S ribosomal subunit.

Its subcellular location is the plastid. It localises to the chloroplast. Functionally, this protein binds to 23S rRNA. This Guillardia theta (Cryptophyte) protein is Large ribosomal subunit protein bL21c.